The primary structure comprises 676 residues: ATP-dependent zinc metalloprotease FTSH 2, chloroplastic (676 aa).

The N-terminal 32 residues, 1–32 (MAPTSMSLAAKTPLPFSTLPSSGVAQRPVSVT), are a transit peptide targeting the chloroplast. A helical transmembrane segment spans residues 155 to 175 (LLFNLIGNLAFPLILIGGLFL). 254 to 261 (GPPGTGKT) contacts ATP. Histidine 475 is a binding site for Zn(2+). The active site involves glutamate 476. Residues histidine 479 and aspartate 553 each contribute to the Zn(2+) site.

This sequence in the N-terminal section; belongs to the AAA ATPase family. It in the C-terminal section; belongs to the peptidase M41 family. Zn(2+) serves as cofactor.

Its subcellular location is the plastid. The protein resides in the chloroplast thylakoid membrane. Probable ATP-dependent zinc metallopeptidase. This Oryza sativa subsp. japonica (Rice) protein is ATP-dependent zinc metalloprotease FTSH 2, chloroplastic (FTSH2).